The chain runs to 514 residues: Major facilitator superfamily domain-containing protein 4A (514 aa).

The next 5 membrane-spanning stretches (helical) occupy residues 19 to 39 (LTYW…GPTL), 53 to 73 (ISWV…LGGV), 82 to 102 (LWAL…IPFC), 107 to 127 (VLAS…TVAN), and 139 to 159 (AVFL…SPLI). A glycan (N-linked (GlcNAc...) asparagine) is linked at asparagine 177. The next 7 membrane-spanning stretches (helical) occupy residues 221–241 (YAFW…LMLL), 307–327 (FFAI…LTGA), 347–367 (VAGY…LLSI), 376–396 (ATMV…LLIF), 400–420 (VVFL…TFPS), 438–458 (VLVT…GSIF), and 466–486 (FLVC…LLLF).

The protein belongs to the major facilitator superfamily.

The protein resides in the membrane. This Homo sapiens (Human) protein is Major facilitator superfamily domain-containing protein 4A.